We begin with the raw amino-acid sequence, 953 residues long: Isoleucine--tRNA ligase (953 aa).

The 'HIGH' region signature appears at Pro-58–His-68. Glu-565 contributes to the L-isoleucyl-5'-AMP binding site. Residues Lys-606 to Ser-610 carry the 'KMSKS' region motif. Lys-609 lines the ATP pocket. Cys-916, Cys-919, Cys-936, and Cys-939 together coordinate Zn(2+).

It belongs to the class-I aminoacyl-tRNA synthetase family. IleS type 1 subfamily. In terms of assembly, monomer. Zn(2+) is required as a cofactor.

The protein localises to the cytoplasm. The enzyme catalyses tRNA(Ile) + L-isoleucine + ATP = L-isoleucyl-tRNA(Ile) + AMP + diphosphate. Functionally, catalyzes the attachment of isoleucine to tRNA(Ile). As IleRS can inadvertently accommodate and process structurally similar amino acids such as valine, to avoid such errors it has two additional distinct tRNA(Ile)-dependent editing activities. One activity is designated as 'pretransfer' editing and involves the hydrolysis of activated Val-AMP. The other activity is designated 'posttransfer' editing and involves deacylation of mischarged Val-tRNA(Ile). The chain is Isoleucine--tRNA ligase from Colwellia psychrerythraea (strain 34H / ATCC BAA-681) (Vibrio psychroerythus).